Here is a 668-residue protein sequence, read N- to C-terminus: tRNA 5-methylaminomethyl-2-thiouridine biosynthesis bifunctional protein MnmC (668 aa).

The segment at 1 to 245 is tRNA (mnm(5)s(2)U34)-methyltransferase; it reads MKHYSIQPAN…KREMLCGVME (245 aa). Residues 270-668 form an FAD-dependent cmnm(5)s(2)U34 oxidoreductase region; sequence IGGGIASALL…LLKGKAVKAG (399 aa).

It in the N-terminal section; belongs to the methyltransferase superfamily. tRNA (mnm(5)s(2)U34)-methyltransferase family. This sequence in the C-terminal section; belongs to the DAO family. FAD is required as a cofactor.

The protein resides in the cytoplasm. The catalysed reaction is 5-aminomethyl-2-thiouridine(34) in tRNA + S-adenosyl-L-methionine = 5-methylaminomethyl-2-thiouridine(34) in tRNA + S-adenosyl-L-homocysteine + H(+). Its function is as follows. Catalyzes the last two steps in the biosynthesis of 5-methylaminomethyl-2-thiouridine (mnm(5)s(2)U) at the wobble position (U34) in tRNA. Catalyzes the FAD-dependent demodification of cmnm(5)s(2)U34 to nm(5)s(2)U34, followed by the transfer of a methyl group from S-adenosyl-L-methionine to nm(5)s(2)U34, to form mnm(5)s(2)U34. The polypeptide is tRNA 5-methylaminomethyl-2-thiouridine biosynthesis bifunctional protein MnmC (Escherichia coli O9:H4 (strain HS)).